The sequence spans 471 residues: Glutamate--tRNA ligase (471 aa).

A 'HIGH' region motif is present at residues 10-20 (PSPTGFLHIGG). A disordered region spans residues 117–137 (GRPPRYDGRWRDRPASERPTD). The 'KMSKS' region signature appears at 239 to 243 (KLSKR). Lysine 242 contributes to the ATP binding site.

It belongs to the class-I aminoacyl-tRNA synthetase family. Glutamate--tRNA ligase type 1 subfamily. Monomer.

The protein localises to the cytoplasm. It carries out the reaction tRNA(Glu) + L-glutamate + ATP = L-glutamyl-tRNA(Glu) + AMP + diphosphate. Its function is as follows. Catalyzes the attachment of glutamate to tRNA(Glu) in a two-step reaction: glutamate is first activated by ATP to form Glu-AMP and then transferred to the acceptor end of tRNA(Glu). The chain is Glutamate--tRNA ligase from Azorhizobium caulinodans (strain ATCC 43989 / DSM 5975 / JCM 20966 / LMG 6465 / NBRC 14845 / NCIMB 13405 / ORS 571).